A 242-amino-acid polypeptide reads, in one-letter code: Orotidine 5'-phosphate decarboxylase (242 aa).

Residues Asp16, Lys37, 64–73, Thr128, Arg190, Gln199, Gly219, and Arg220 each bind substrate; that span reads DLKFHDIPNT. Residue Lys66 is the Proton donor of the active site.

It belongs to the OMP decarboxylase family. Type 1 subfamily. Homodimer.

The enzyme catalyses orotidine 5'-phosphate + H(+) = UMP + CO2. Its pathway is pyrimidine metabolism; UMP biosynthesis via de novo pathway; UMP from orotate: step 2/2. Catalyzes the decarboxylation of orotidine 5'-monophosphate (OMP) to uridine 5'-monophosphate (UMP). The sequence is that of Orotidine 5'-phosphate decarboxylase from Prochlorococcus marinus (strain MIT 9215).